The chain runs to 361 residues: Eukaryotic translation initiation factor 3 subunit F (361 aa).

Low complexity-rich tracts occupy residues 1 to 11 (MATPVVSASGP) and 21 to 42 (AAPASASASVPAPTPAPAAAAV). The disordered stretch occupies residues 1–42 (MATPVVSASGPPATPAPAPVAAPASASASVPAPTPAPAAAAV). An N-acetylalanine modification is found at Ala2. Phosphoserine; by CDK11; in vitro is present on Ser50. Over residues 55–78 (AAAATTAAPGQTPASAQAPAQTPA) the composition is skewed to low complexity. The segment at 55–86 (AAAATTAAPGQTPASAQAPAQTPAPALPGPAL) is disordered. The 131-residue stretch at 96-226 (VRLHPVILAS…IKAYVSTLMG (131 aa)) folds into the MPN domain. Position 242 is an N6-acetyllysine (Lys242). At Ser262 the chain carries Phosphoserine.

The protein belongs to the eIF-3 subunit F family. As to quaternary structure, component of the eukaryotic translation initiation factor 3 (eIF-3) complex, which is composed of 13 subunits: EIF3A, EIF3B, EIF3C, EIF3D, EIF3E, EIF3F, EIF3G, EIF3H, EIF3I, EIF3J, EIF3K, EIF3L and EIF3M. The eIF-3 complex appears to include 3 stable modules: module A is composed of EIF3A, EIF3B, EIF3G and EIF3I; module B is composed of EIF3F, EIF3H, and EIF3M; and module C is composed of EIF3C, EIF3D, EIF3E, EIF3K and EIF3L. EIF3C of module C binds EIF3B of module A and EIF3H of module B, thereby linking the three modules. EIF3J is a labile subunit that binds to the eIF-3 complex via EIF3B. The eIF-3 complex interacts with RPS6KB1 under conditions of nutrient depletion. Mitogenic stimulation leads to binding and activation of a complex composed of MTOR and RPTOR, leading to phosphorylation and release of RPS6KB1 and binding of EIF4B to eIF-3. Interacts with RNF139; the interaction leads to protein translation inhibitions in a ubiquitination-dependent manner. Interacts with DTX1, the interaction is required for deubiquitinating activity towards NOTCH1. In terms of processing, phosphorylation is enhanced upon serum stimulation. Phosphorylated during apoptosis by caspase-processed CDK11.

The protein resides in the cytoplasm. It carries out the reaction Thiol-dependent hydrolysis of ester, thioester, amide, peptide and isopeptide bonds formed by the C-terminal Gly of ubiquitin (a 76-residue protein attached to proteins as an intracellular targeting signal).. In terms of biological role, component of the eukaryotic translation initiation factor 3 (eIF-3) complex, which is required for several steps in the initiation of protein synthesis. The eIF-3 complex associates with the 40S ribosome and facilitates the recruitment of eIF-1, eIF-1A, eIF-2:GTP:methionyl-tRNAi and eIF-5 to form the 43S pre-initiation complex (43S PIC). The eIF-3 complex stimulates mRNA recruitment to the 43S PIC and scanning of the mRNA for AUG recognition. The eIF-3 complex is also required for disassembly and recycling of post-termination ribosomal complexes and subsequently prevents premature joining of the 40S and 60S ribosomal subunits prior to initiation. The eIF-3 complex specifically targets and initiates translation of a subset of mRNAs involved in cell proliferation, including cell cycling, differentiation and apoptosis, and uses different modes of RNA stem-loop binding to exert either translational activation or repression. Functionally, deubiquitinates activated NOTCH1, promoting its nuclear import, thereby acting as a positive regulator of Notch signaling. The protein is Eukaryotic translation initiation factor 3 subunit F of Macaca fascicularis (Crab-eating macaque).